Here is a 367-residue protein sequence, read N- to C-terminus: MPKKAEAKTGSSSKTTKRTVAKKDVKAEVNETNKTAEKVSSKKVNKTANSVDTNESSSNSTPSTGSKFELSSFKEKVAEIENNILQKIKENPTITGKPFRKLVSVNKLMETGAHIGLTTRKWNPKMKKFIYTKKGNNHIIDLLHTVISLNVAYNFLLDLVKANSNSESSPVLIVGTRGKTIKNHVKEQAKRSHAFYINERWLGGTLTNFSTITKSVAKFNNLILIHKNGEINKYTKKEQVELKKKTEKYAKYFSGIRTMKELPKVIILTDPEINKIAIKEARNLGIPVIAICNTNANPDLVDYVIPANNHSIKSVYLLVGLLCDAVAEAKGLPKAFAEKKDEEILLPEVIKRKPENRRQNNHSFNKN.

The disordered stretch occupies residues 1 to 68 (MPKKAEAKTG…NSTPSTGSKF (68 aa)). Residues 21–40 (AKKDVKAEVNETNKTAEKVS) show a composition bias toward basic and acidic residues. Positions 53-66 (TNESSSNSTPSTGS) are enriched in low complexity.

This sequence belongs to the universal ribosomal protein uS2 family.

The chain is Small ribosomal subunit protein uS2 from Malacoplasma penetrans (strain HF-2) (Mycoplasma penetrans).